Consider the following 295-residue polypeptide: MERIQGRIVRGIAGFYYVATERGIIECRARGKFRKDNIIPLVGDIAEVQLVNEKEGYILEILPRKNQLVRPPVANVDQAIIVFAISKPEINRVLLDKMIVVAEINKIEPVVCINKVDMEKREEVENLINVYRKIGYKAVGTSAVTGEGMEELKSYLKDKISFFAGPSGVGKSSLINLIQSNIRLKTGELSEKLGRGRHTTRSVEFLPLDFGGYVLDTPGFTALEIDIPKEELRNYFREFIEFQENCRFNSCLHVNEPDCAVTEAVDEGIIDRQRYISYLTLLREVKEKEKRRYKN.

A CP-type G domain is found at 65–223 (KNQLVRPPVA…VLDTPGFTAL (159 aa)). GTP-binding positions include 114-117 (NKVD) and 165-173 (GPSGVGKSS). Residues C246, C251, H253, and C259 each coordinate Zn(2+).

Belongs to the TRAFAC class YlqF/YawG GTPase family. RsgA subfamily. As to quaternary structure, monomer. Associates with 30S ribosomal subunit, binds 16S rRNA. Zn(2+) serves as cofactor.

The protein resides in the cytoplasm. In terms of biological role, one of several proteins that assist in the late maturation steps of the functional core of the 30S ribosomal subunit. Helps release RbfA from mature subunits. May play a role in the assembly of ribosomal proteins into the subunit. Circularly permuted GTPase that catalyzes slow GTP hydrolysis, GTPase activity is stimulated by the 30S ribosomal subunit. The polypeptide is Small ribosomal subunit biogenesis GTPase RsgA (Caldanaerobacter subterraneus subsp. tengcongensis (strain DSM 15242 / JCM 11007 / NBRC 100824 / MB4) (Thermoanaerobacter tengcongensis)).